The primary structure comprises 834 residues: MGENDDGCSTQLIDGNGEFNVKGLDNFVKKTKLSDCGLSYAVVAIMGPQSSGKSTLLNHLFKTSFREMDAFAGRSQTTKGIWMARCVGIEPFTIAMDLEGTDGRERGEDDTTFEKQSALFAIAVADIVLINMWCHDIGREQAANKPLLKTVFQVMLRLFSPRKTTLLFVIRDKTKTPIELLERALREDIQKIWDSVRKPEAHKNTPLNEFFNVMIVALSSYEEKEKQFEQEVAELRQRFFHSISPGGLAGDRRGVVPASGFSFSSQQIWKVIKENRDLDLPAHKVMVATVRCEEIANEKLRDLATNESWLELHEAAEGGLVPGFGKKLSSILEKYFSEYDAEAIYFDEGVRKEKRLQLKLNALDFVYPSYATMLGHLRSNALESFKIRLEQSLNQGEGFAKAVRDSQQSCLMVFDKGCEDAAVKQATWDASKIREKLCRDIDAHTFFARSAKLSELTANYEKRLTQALSEPVESLFEAGGKETWPSIRKLLKRETETAVTDFLDVVTGFELDHAKIDAMVQNLKNYSQSLVEKKAREEAAKILIRMKDRFSTVFSHDKDSMPRVWTGKEDIRAITKDARAEALSLLSVMTAIRLDERPDNIESTLFSSLMDGTVSAASSHNRSVGTSTDPLASSSWEEVPPNNILLTPVQCKSLWRQFKSETEYTVTQAISAQEAHKRNNNWLPPAWAIVLMIVLGFNEFMMLLKNPLYLLGFFVAFLLSKALWVQLDIPREFQHGAVAGVLSITSKFLPTVMNLLRKLAEEAQGKTTQEVPDLSASQTYRQQSPSHSISSTISESVASNISSAGDDAEYSSPSPALVRRRNTNNVQESEISQM.

Over 1 to 683 (MGENDDGCST…EAHKRNNNWL (683 aa)) the chain is Cytoplasmic. The region spanning 37–252 (GLSYAVVAIM…ISPGGLAGDR (216 aa)) is the GB1/RHD3-type G domain. Residue 47–54 (GPQSSGKS) coordinates GTP. Residues 214–241 (MIVALSSYEEKEKQFEQEVAELRQRFFH) are a coiled coil. A helical membrane pass occupies residues 684–704 (PPAWAIVLMIVLGFNEFMMLL). Over 705-707 (KNP) the chain is Lumenal. The chain crosses the membrane as a helical span at residues 708 to 728 (LYLLGFFVAFLLSKALWVQLD). Topologically, residues 729 to 834 (IPREFQHGAV…NVQESEISQM (106 aa)) are cytoplasmic. Residues 767–783 (TTQEVPDLSASQTYRQQ) show a composition bias toward polar residues. Residues 767 to 834 (TTQEVPDLSA…NVQESEISQM (68 aa)) form a disordered region. A compositionally biased stretch (low complexity) spans 784–803 (SPSHSISSTISESVASNISS). The span at 823-834 (TNNVQESEISQM) shows a compositional bias: polar residues.

It belongs to the TRAFAC class dynamin-like GTPase superfamily. GB1/RHD3 GTPase family. RHD3 subfamily. Expressed in roots, leaves, stems and flowers.

The protein resides in the endoplasmic reticulum membrane. Probable GTP-binding protein that may be involved in cell development. The protein is Protein ROOT HAIR DEFECTIVE 3 homolog 2 of Arabidopsis thaliana (Mouse-ear cress).